We begin with the raw amino-acid sequence, 230 residues long: Cytochrome b6-f complex iron-sulfur subunit, chloroplastic (230 aa).

Residues 1–51 (MASFTLSSATPSQLCSSKNGMFAPSLALAKAGRVNVLISKERIRGMKLTCQ) constitute a chloroplast transit peptide. A helical membrane pass occupies residues 73-93 (LLGALSLPTGYMLLPYASFFV). The region spanning 116–212 (AAEWLKTHAP…CDVDDGKVVF (97 aa)) is the Rieske domain. Positions 158, 160, 176, and 179 each coordinate [2Fe-2S] cluster. An intrachain disulfide couples Cys163 to Cys178.

This sequence belongs to the Rieske iron-sulfur protein family. In terms of assembly, the 4 large subunits of the cytochrome b6-f complex are cytochrome b6, subunit IV (17 kDa polypeptide, petD), cytochrome f and the Rieske protein, while the 4 small subunits are petG, petL, petM and petN. The complex functions as a dimer. [2Fe-2S] cluster serves as cofactor.

The protein localises to the plastid. It localises to the chloroplast thylakoid membrane. The enzyme catalyses 2 oxidized [plastocyanin] + a plastoquinol + 2 H(+)(in) = 2 reduced [plastocyanin] + a plastoquinone + 4 H(+)(out). Component of the cytochrome b6-f complex, which mediates electron transfer between photosystem II (PSII) and photosystem I (PSI), cyclic electron flow around PSI, and state transitions. The chain is Cytochrome b6-f complex iron-sulfur subunit, chloroplastic (petC) from Spinacia oleracea (Spinach).